Reading from the N-terminus, the 744-residue chain is Probable ubiquitin carboxyl-terminal hydrolase MINDY-4 (744 aa).

Residues serine 143, serine 220, and serine 224 each carry the phosphoserine modification. Positions 211–358 (GMMAGPVASS…QLVSDRTDDK (148 aa)) are disordered. Residues 265–277 (VPDSSSDSVSRSP) show a composition bias toward low complexity. A compositionally biased stretch (polar residues) spans 290-299 (NVTSSSQGLS). Residue serine 295 is modified to Phosphoserine. Over residues 300–310 (QRDRPRLRSVS) the composition is skewed to basic and acidic residues. Cysteine 443 serves as the catalytic Nucleophile. Histidine 664 serves as the catalytic Proton acceptor.

The protein belongs to the MINDY deubiquitinase family. FAM188 subfamily.

The catalysed reaction is Thiol-dependent hydrolysis of ester, thioester, amide, peptide and isopeptide bonds formed by the C-terminal Gly of ubiquitin (a 76-residue protein attached to proteins as an intracellular targeting signal).. Probable hydrolase that can remove 'Lys-48'-linked conjugated ubiquitin from proteins. The polypeptide is Probable ubiquitin carboxyl-terminal hydrolase MINDY-4 (Mindy4) (Mus musculus (Mouse)).